A 376-amino-acid polypeptide reads, in one-letter code: Carbohydrate sulfotransferase 14 (376 aa).

Residues 1–39 lie on the Cytoplasmic side of the membrane; it reads MFPRPLTPLAAPNGAEPLGRALRRAPLGRARAGLGGPPL. A helical; Signal-anchor for type II membrane protein transmembrane segment spans residues 40–60; the sequence is LLPSMLMFAVIVASSGLLLMI. The Lumenal portion of the chain corresponds to 61–376; it reads ERGILAEMKP…PNVTKEACQQ (316 aa). The N-linked (GlcNAc...) asparagine glycan is linked to N110. 3'-phosphoadenylyl sulfate-binding positions include 155-161 and 213-221; these read PKVACSN and REPLERLLS. N368 is a glycosylation site (N-linked (GlcNAc...) asparagine).

Belongs to the sulfotransferase 2 family. As to expression, widely expressed. Expressed at high level in pituitary gland, placenta, uterus and thyroid.

The protein resides in the golgi apparatus membrane. It catalyses the reaction dermatan + n 3'-phosphoadenylyl sulfate = dermatan 4'-sulfate + n adenosine 3',5'-bisphosphate + n H(+). Functionally, catalyzes the transfer of sulfate to position 4 of the N-acetylgalactosamine (GalNAc) residue of dermatan sulfate. Plays a pivotal role in the formation of 4-0-sulfated IdoA blocks in dermatan sulfate. Transfers sulfate to the C-4 hydroxyl of beta1,4-linked GalNAc that is substituted with an alpha-linked iduronic acid (IdoUA) at the C-3 hydroxyl. Transfers sulfate more efficiently to GalNAc residues in -IdoUA-GalNAc-IdoUA- than in -GlcUA-GalNAc-GlcUA-sequences. Has preference for partially desulfated dermatan sulfate. Addition of sulfate to GalNAc may occur immediately after epimerization of GlcUA to IdoUA. Appears to have an important role in the formation of the cerebellar neural network during postnatal brain development. In Homo sapiens (Human), this protein is Carbohydrate sulfotransferase 14 (CHST14).